The primary structure comprises 794 residues: Cilia- and flagella-associated protein 184 (794 aa).

2 disordered regions span residues 1-105 (MASE…VNSE) and 386-458 (AHEE…QQDT). Low complexity predominate over residues 24–35 (QMQQYMMEMQRQ). Residues 49–69 (EGYEEGQEGEGYGEEYGDQDY) show a composition bias toward acidic residues. 3 stretches are compositionally biased toward basic and acidic residues: residues 89–103 (QVNE…RRVN), 386–411 (AHEE…KDYG), and 431–445 (ISDK…HAEQ). Low complexity predominate over residues 446–456 (EQNQQAAQQQQ). Coiled-coil stretches lie at residues 461-613 (NKEI…LRLR) and 638-775 (FEQL…ANQI). Over residues 774-787 (QISTQNMQSQNNSL) the composition is skewed to polar residues. The disordered stretch occupies residues 774-794 (QISTQNMQSQNNSLKKPYQPY).

It belongs to the CFAP184 family. As to quaternary structure, forms a complex with CFAP263; the interaction is required for functional activity in cilia.

It localises to the cell projection. Its subcellular location is the cilium. Its function is as follows. In complex with CFAP263, acts as a regulator of ciliary beating that connects radial spoke 3 (RS3) to the inner dynein arm (IDA) and the nexin-dynein regulatory complex (N-DRC). The complex is positioned parallel to N-DRC and forms a connection between the arch at the base of RS3, the IDA tail and N-DRC. The chain is Cilia- and flagella-associated protein 184 (CFAP184) from Tetrahymena thermophila (strain SB210).